Consider the following 199-residue polypeptide: Melanocortin-2 receptor accessory protein 2B (199 aa).

An N-linked (GlcNAc...) asparagine glycan is attached at asparagine 6. The helical transmembrane segment at 39–59 threads the bilayer; it reads IVIGFWVGLAVFVIFMFFVLT.

Belongs to the MRAP family. In terms of assembly, interacts with mc4r. Expressed in adult brain.

It is found in the cell membrane. The protein localises to the endoplasmic reticulum membrane. Its function is as follows. Activator of melanocortin receptor 4 (mc4r), a receptor involved in energy homeostasis. Plays a role after larval development in the control of energy homeostasis and body weight regulation by increasing ligand-sensitivity of mc4r and mc4r-mediated generation of cAMP once the zebrafish begins feeding, increasing the capacity for regulated feeding and growth. The polypeptide is Melanocortin-2 receptor accessory protein 2B (mrap2b) (Danio rerio (Zebrafish)).